The chain runs to 134 residues: Fluoride-specific ion channel FluC (134 aa).

4 helical membrane-spanning segments follow: residues 7-27, 38-58, 69-89, and 110-130; these read LAVA…TIMA, GTLL…IVLV, LFLF…AAES, and VGSL…LLGH. The Na(+) site is built by G77 and T80.

It belongs to the fluoride channel Fluc/FEX (TC 1.A.43) family.

Its subcellular location is the cell inner membrane. The catalysed reaction is fluoride(in) = fluoride(out). With respect to regulation, na(+) is not transported, but it plays an essential structural role and its presence is essential for fluoride channel function. Functionally, fluoride-specific ion channel. Important for reducing fluoride concentration in the cell, thus reducing its toxicity. The protein is Fluoride-specific ion channel FluC of Legionella pneumophila (strain Paris).